The following is a 295-amino-acid chain: Tyrosine recombinase XerD (295 aa).

The Core-binding (CB) domain maps to 1–85 (MDTIIEEYLK…TIRSFHQFAL (85 aa)). In terms of domain architecture, Tyr recombinase spans 106-289 (KLPDVLEINE…SKSQIRKMYN (184 aa)). Active-site residues include R146, K170, H241, R244, and H267. Y276 functions as the O-(3'-phospho-DNA)-tyrosine intermediate in the catalytic mechanism.

The protein belongs to the 'phage' integrase family. XerD subfamily. In terms of assembly, forms a cyclic heterotetrameric complex composed of two molecules of XerC and two molecules of XerD.

The protein localises to the cytoplasm. Site-specific tyrosine recombinase, which acts by catalyzing the cutting and rejoining of the recombining DNA molecules. The XerC-XerD complex is essential to convert dimers of the bacterial chromosome into monomers to permit their segregation at cell division. It also contributes to the segregational stability of plasmids. The sequence is that of Tyrosine recombinase XerD from Staphylococcus saprophyticus subsp. saprophyticus (strain ATCC 15305 / DSM 20229 / NCIMB 8711 / NCTC 7292 / S-41).